The primary structure comprises 222 residues: Ras-related protein Rab-41 (222 aa).

Residues Ser41, Val42, Gly43, Lys44, Thr45, Ser46, and Thr63 each contribute to the GTP site. Thr45 provides a ligand contact to Mg(2+). The interval 58 to 66 is switch-I; sequence CACQATVGI. Residues Thr63 and Asp86 each coordinate Mg(2+). 7 residues coordinate GTP: Gly89, Asn144, Lys145, Asp147, Ser174, Ala175, and Lys176. The tract at residues 89-105 is switch-II; that stretch reads GQERFHSLIPSYIRDST. The S-geranylgeranyl cysteine moiety is linked to residue Cys222.

The protein belongs to the small GTPase superfamily. Rab family. It depends on Mg(2+) as a cofactor. Widely expressed in brain, testis, lung, heart, ovary, colon, kidney, uterus and spleen but not in liver.

Its subcellular location is the cytoplasm. The enzyme catalyses GTP + H2O = GDP + phosphate + H(+). Regulated by guanine nucleotide exchange factors (GEFs) which promote the exchange of bound GDP for free GTP. Regulated by GTPase activating proteins (GAPs) which increase the GTP hydrolysis activity. Inhibited by GDP dissociation inhibitors (GDIs). In terms of biological role, the small GTPases Rab are key regulators of intracellular membrane trafficking, from the formation of transport vesicles to their fusion with membranes. Rabs cycle between an inactive GDP-bound form and an active GTP-bound form that is able to recruit to membranes different sets of downstream effectors directly responsible for vesicle formation, movement, tethering and fusion. RAB41 is required for normal Golgi ribbon organization and ER-to-Golgi trafficking. This chain is Ras-related protein Rab-41, found in Homo sapiens (Human).